Consider the following 209-residue polypeptide: Large ribosomal subunit protein uL3 (209 aa).

This sequence belongs to the universal ribosomal protein uL3 family. Part of the 50S ribosomal subunit. Forms a cluster with proteins L14 and L19.

One of the primary rRNA binding proteins, it binds directly near the 3'-end of the 23S rRNA, where it nucleates assembly of the 50S subunit. This chain is Large ribosomal subunit protein uL3, found in Pelobacter propionicus (strain DSM 2379 / NBRC 103807 / OttBd1).